The sequence spans 227 residues: Ion-translocating oxidoreductase complex subunit E (227 aa).

A run of 5 helical transmembrane segments spans residues 34–56 (AINAIGLGMTTTLVLTITNTIIS), 68–88 (IPIYMMIISSVVTSIEMLLHA), 91–111 (FNLYQSLGIFIPLIVTNCIIV), 127–147 (FFDGIFIGLGSMFAMFAVGSI), and 181–201 (TIILAVFPPGGFLILGFLIAI).

The protein belongs to the NqrDE/RnfAE family. The complex is composed of six subunits: RnfA, RnfB, RnfC, RnfD, RnfE and RnfG.

The protein resides in the cell inner membrane. Part of a membrane-bound complex that couples electron transfer with translocation of ions across the membrane. This Buchnera aphidicola subsp. Acyrthosiphon pisum (strain 5A) protein is Ion-translocating oxidoreductase complex subunit E.